Consider the following 298-residue polypeptide: Ribosomal protein L11 methyltransferase (298 aa).

The S-adenosyl-L-methionine site is built by Thr-152, Gly-176, Asp-198, and Asn-236.

It belongs to the methyltransferase superfamily. PrmA family.

The protein localises to the cytoplasm. It carries out the reaction L-lysyl-[protein] + 3 S-adenosyl-L-methionine = N(6),N(6),N(6)-trimethyl-L-lysyl-[protein] + 3 S-adenosyl-L-homocysteine + 3 H(+). In terms of biological role, methylates ribosomal protein L11. This Polaromonas sp. (strain JS666 / ATCC BAA-500) protein is Ribosomal protein L11 methyltransferase.